A 107-amino-acid polypeptide reads, in one-letter code: MTTQAIHSVLAMMNITAEQAAGNTLTLSAPATAGAGFMSELNSSIKQINGMQIEARRKAEKFELGVPGIALNDVMVDMQKASLALHLGIQVNNKLINAYQEVMNMAV.

It belongs to the FliE family.

Its subcellular location is the bacterial flagellum basal body. This Sodalis glossinidius (strain morsitans) protein is Flagellar hook-basal body complex protein FliE.